Reading from the N-terminus, the 1092-residue chain is Isoleucine--tRNA ligase (1092 aa).

The 'HIGH' region motif lies at 53-63 (PFANGLPHYGH). A 'KMSKS' region motif is present at residues 613–617 (KLSKR). K616 contributes to the ATP binding site.

This sequence belongs to the class-I aminoacyl-tRNA synthetase family. IleS type 2 subfamily. Monomer. Zn(2+) serves as cofactor.

It is found in the cytoplasm. The enzyme catalyses tRNA(Ile) + L-isoleucine + ATP = L-isoleucyl-tRNA(Ile) + AMP + diphosphate. In terms of biological role, catalyzes the attachment of isoleucine to tRNA(Ile). As IleRS can inadvertently accommodate and process structurally similar amino acids such as valine, to avoid such errors it has two additional distinct tRNA(Ile)-dependent editing activities. One activity is designated as 'pretransfer' editing and involves the hydrolysis of activated Val-AMP. The other activity is designated 'posttransfer' editing and involves deacylation of mischarged Val-tRNA(Ile). The protein is Isoleucine--tRNA ligase of Rickettsia africae (strain ESF-5).